Reading from the N-terminus, the 981-residue chain is Isoleucine--tRNA ligase (981 aa).

A 'HIGH' region motif is present at residues proline 50 to histidine 60. Residues lysine 604 to serine 608 carry the 'KMSKS' region motif. Lysine 607 serves as a coordination point for ATP.

The protein belongs to the class-I aminoacyl-tRNA synthetase family. IleS type 2 subfamily. In terms of assembly, monomer. Zn(2+) serves as cofactor.

The protein resides in the cytoplasm. The enzyme catalyses tRNA(Ile) + L-isoleucine + ATP = L-isoleucyl-tRNA(Ile) + AMP + diphosphate. Catalyzes the attachment of isoleucine to tRNA(Ile). As IleRS can inadvertently accommodate and process structurally similar amino acids such as valine, to avoid such errors it has two additional distinct tRNA(Ile)-dependent editing activities. One activity is designated as 'pretransfer' editing and involves the hydrolysis of activated Val-AMP. The other activity is designated 'posttransfer' editing and involves deacylation of mischarged Val-tRNA(Ile). This Pyrobaculum aerophilum (strain ATCC 51768 / DSM 7523 / JCM 9630 / CIP 104966 / NBRC 100827 / IM2) protein is Isoleucine--tRNA ligase.